We begin with the raw amino-acid sequence, 263 residues long: MKVVTGATDGIGRSYALDLARRGFNIFLISRTKSKLVKTKKQILNKYSDIEVRYAICDFTRVSYEDYKRLLHSLNEVDIGILINNVGMCFDNPEVLHRVEGGIDTLTNVINVNILPVTLLTAGILPQMMARKSGIIVNIGSAAGSIHMAKWSVYSATKKYIEWFTSILQKEYENEGIICQTITPLLVSTNMIKNPLSSIFCPNSDSFAKSSLNTIGNSSSTTGYITHQIQFELIKFVPEIIIDLFVKNLNNQLLDYQLDKKRV.

The Proton acceptor role is filled by Y154.

This sequence belongs to the short-chain dehydrogenases/reductases (SDR) family. 17-beta-HSD 3 subfamily.

This is Putative steroid dehydrogenase 4 (stdh-4) from Caenorhabditis elegans.